A 185-amino-acid polypeptide reads, in one-letter code: NADH-quinone oxidoreductase subunit B (185 aa).

Cys64, Cys65, Cys129, and Cys159 together coordinate [4Fe-4S] cluster.

It belongs to the complex I 20 kDa subunit family. In terms of assembly, NDH-1 is composed of 14 different subunits. Subunits NuoB, C, D, E, F, and G constitute the peripheral sector of the complex. [4Fe-4S] cluster is required as a cofactor.

Its subcellular location is the cell inner membrane. The catalysed reaction is a quinone + NADH + 5 H(+)(in) = a quinol + NAD(+) + 4 H(+)(out). Its function is as follows. NDH-1 shuttles electrons from NADH, via FMN and iron-sulfur (Fe-S) centers, to quinones in the respiratory chain. Couples the redox reaction to proton translocation (for every two electrons transferred, four hydrogen ions are translocated across the cytoplasmic membrane), and thus conserves the redox energy in a proton gradient. This Rhodospirillum rubrum (strain ATCC 11170 / ATH 1.1.1 / DSM 467 / LMG 4362 / NCIMB 8255 / S1) protein is NADH-quinone oxidoreductase subunit B.